The primary structure comprises 885 residues: Translation initiation factor IF-2 (885 aa).

The segment at 1-295 is disordered; sequence MTDNKDDKTI…EKFKRSQMQE (295 aa). Positions 63-77 are enriched in low complexity; sequence PVAAAPAAARPAEQR. Residues 78–94 show a composition bias toward pro residues; it reads PMPPQPSGRPAPQPQPH. Residues 130–183 show a composition bias toward basic and acidic residues; the sequence is RDAEEAKRRAEEEVRRRREEEERIAREKEEAARRAAEEAARPAVEAEKVEEKVE. The span at 184 to 201 shows a compositional bias: low complexity; the sequence is AATPAVAETRPLSERPAP. The region spanning 383 to 550 is the tr-type G domain; it reads ARPPIVTIMG…AILLQSEILD (168 aa). Residues 392–399 are G1; it reads GHVDHGKT. Position 392–399 (392–399) interacts with GTP; the sequence is GHVDHGKT. The interval 417–421 is G2; that stretch reads GITQH. The G3 stretch occupies residues 438–441; it reads DTPG. GTP-binding positions include 438-442 and 492-495; these read DTPGH and NKID. The interval 492–495 is G4; that stretch reads NKID. The segment at 528–530 is G5; sequence SAK.

Belongs to the TRAFAC class translation factor GTPase superfamily. Classic translation factor GTPase family. IF-2 subfamily.

It is found in the cytoplasm. One of the essential components for the initiation of protein synthesis. Protects formylmethionyl-tRNA from spontaneous hydrolysis and promotes its binding to the 30S ribosomal subunits. Also involved in the hydrolysis of GTP during the formation of the 70S ribosomal complex. In Sinorhizobium medicae (strain WSM419) (Ensifer medicae), this protein is Translation initiation factor IF-2.